We begin with the raw amino-acid sequence, 449 residues long: HSPB1-associated protein 1 homolog (449 aa).

The region spanning 102 to 266 (WAYADYKYIA…DEARVAEALT (165 aa)) is the JmjC domain. Over residues 385-395 (DQDKLRSDNKL) the composition is skewed to basic and acidic residues. The tract at residues 385–416 (DQDKLRSDNKLGQRSGQSVLQDTENPGGSGEM) is disordered. Polar residues predominate over residues 396 to 410 (GQRSGQSVLQDTENP).

It is found in the cytoplasm. Its function is as follows. May play a role in cellular stress response. This chain is HSPB1-associated protein 1 homolog (hspbap1), found in Danio rerio (Zebrafish).